The following is a 400-amino-acid chain: MSKLILAINAGSSSLKFQLIRMPEEELVTKGLIERIGLKDSIFTIEVNGEKVKTVQDIKDHVEAVDIMLDAFKAHNIINDINDIVGTGHRVVHGGEKFPESVAITDEVEKEIEELSELAPLHNPANLMGIRAFRKLLPNIPHVAIFDTAFHQTMPEKAYLYSLPYHYYKDYGIRKYGFHGTSHKFVSQRAAEMLDKPIEDLRIISCHIGNGASIAAIDGGKSIDTSMGFTPLAGVTMGTRSGNIDPALIPFIMEKTGKTAEQVLEILNKESGLLGLSGTSSDLRDLSEEAESGKARSQMALDVFASKIHKYIGSYAARMHGVDVIVFTAGIGENSVEIRAKVLEGLEFMGVYWDPKKNENLLRGKEGFINYPHSPVKVVVIPTDEESMIARDVMTFGGLK.

Asparagine 9 is a binding site for Mg(2+). Lysine 16 is a binding site for ATP. Arginine 90 provides a ligand contact to substrate. The active-site Proton donor/acceptor is aspartate 147. Residues 207-211 (HIGNG), 282-284 (DLR), and 330-334 (GIGEN) contribute to the ATP site. Glutamate 385 provides a ligand contact to Mg(2+).

The protein belongs to the acetokinase family. Homodimer. Mg(2+) serves as cofactor. Mn(2+) is required as a cofactor.

It is found in the cytoplasm. It catalyses the reaction acetate + ATP = acetyl phosphate + ADP. Its pathway is metabolic intermediate biosynthesis; acetyl-CoA biosynthesis; acetyl-CoA from acetate: step 1/2. Its function is as follows. Catalyzes the formation of acetyl phosphate from acetate and ATP. Can also catalyze the reverse reaction. The sequence is that of Acetate kinase from Staphylococcus aureus (strain Mu3 / ATCC 700698).